A 654-amino-acid chain; its full sequence is NADH-ubiquinone oxidoreductase chain 5 (654 aa).

The next 16 helical transmembrane spans lie at 1-21, 30-50, 76-96, 113-133, 135-155, 178-198, 200-220, 241-261, 274-294, 301-320, 324-346, 365-385, 406-426, 451-471, 510-530, and 612-632; these read MYLA…FLGR, LITC…FYEV, FIYD…SALV, FFAY…GDNY, VMFI…NFWF, FSIG…TTVF, LAPF…LVAA, TPVS…YLLL, LILI…TGLL, VIAY…CGLS, VALF…AGSV, LLPF…ALPF, SGNL…MYSI, PLIM…FGYV, FLPL…YWIF, and TYAM…FFIG.

Belongs to the complex I subunit 5 family.

The protein resides in the mitochondrion inner membrane. It carries out the reaction a ubiquinone + NADH + 5 H(+)(in) = a ubiquinol + NAD(+) + 4 H(+)(out). Functionally, core subunit of the mitochondrial membrane respiratory chain NADH dehydrogenase (Complex I) that is believed to belong to the minimal assembly required for catalysis. Complex I functions in the transfer of electrons from NADH to the respiratory chain. The immediate electron acceptor for the enzyme is believed to be ubiquinone. In Rhizopus stolonifer (Rhizopus nigricans), this protein is NADH-ubiquinone oxidoreductase chain 5 (ND5).